Here is a 196-residue protein sequence, read N- to C-terminus: Probable malonic semialdehyde reductase RutE (196 aa).

This sequence belongs to the nitroreductase family. HadB/RutE subfamily. Requires FMN as cofactor.

The catalysed reaction is 3-hydroxypropanoate + NADP(+) = 3-oxopropanoate + NADPH + H(+). May reduce toxic product malonic semialdehyde to 3-hydroxypropionic acid, which is excreted. The polypeptide is Probable malonic semialdehyde reductase RutE (Shigella dysenteriae serotype 1 (strain Sd197)).